We begin with the raw amino-acid sequence, 669 residues long: DNA ligase (669 aa).

NAD(+)-binding positions include D32–D36, S81–L82, and E113. K115 functions as the N6-AMP-lysine intermediate in the catalytic mechanism. The NAD(+) site is built by R136, E173, K290, and K314. 4 residues coordinate Zn(2+): C408, C411, C426, and C432. The BRCT domain maps to A592–K669.

This sequence belongs to the NAD-dependent DNA ligase family. LigA subfamily. Mg(2+) is required as a cofactor. Requires Mn(2+) as cofactor.

The catalysed reaction is NAD(+) + (deoxyribonucleotide)n-3'-hydroxyl + 5'-phospho-(deoxyribonucleotide)m = (deoxyribonucleotide)n+m + AMP + beta-nicotinamide D-nucleotide.. Its function is as follows. DNA ligase that catalyzes the formation of phosphodiester linkages between 5'-phosphoryl and 3'-hydroxyl groups in double-stranded DNA using NAD as a coenzyme and as the energy source for the reaction. It is essential for DNA replication and repair of damaged DNA. This Vibrio cholerae serotype O1 (strain ATCC 39315 / El Tor Inaba N16961) protein is DNA ligase.